Consider the following 183-residue polypeptide: MPFYICSDPDPKRTVRGPRFTVPDPKPPPDPAHPLDDTDNVMTAFPKFKPYGFSVYNPWDPIFLSMFGRAGRNGAKGPRGRRRSPRPPGGSSMTPGDDGNQGPRGPGEQRDQPDQMDPLVHPVTSVRSGPWERLGLRGRGESGVLRETLEMWAGQEGLISRVRDDPRESEVRPVTGVQTVWPE.

3 disordered regions span residues 1–44 (MPFY…VMTA), 68–137 (GRAG…LGLR), and 163–183 (RDDPRESEVRPVTGVQTVWPE).

This is an uncharacterized protein from Dryophytes versicolor (chameleon treefrog).